The sequence spans 57 residues: U13-myrmicitoxin-Mri1a (57 aa).

The N-terminal stretch at 1 to 23 is a signal peptide; it reads MKIIHVLLLVAVVAITMSPSIMA. The propeptide occupies 24–29; the sequence is ESVAEA. A Glutamic acid 1-amide modification is found at glutamate 56.

Expressed by the venom gland.

It is found in the secreted. In terms of biological role, induces paralysis 1 hour after injection into insects (blowfly L.caesar) but does not appear to be lethal. The chain is U13-myrmicitoxin-Mri1a from Manica rubida (European giant red ant).